The sequence spans 361 residues: Peptide chain release factor 1 (361 aa).

Gln237 is subject to N5-methylglutamine.

It belongs to the prokaryotic/mitochondrial release factor family. Methylated by PrmC. Methylation increases the termination efficiency of RF1.

It localises to the cytoplasm. Its function is as follows. Peptide chain release factor 1 directs the termination of translation in response to the peptide chain termination codons UAG and UAA. This Chromohalobacter salexigens (strain ATCC BAA-138 / DSM 3043 / CIP 106854 / NCIMB 13768 / 1H11) protein is Peptide chain release factor 1.